We begin with the raw amino-acid sequence, 397 residues long: Succinate--CoA ligase [ADP-forming] subunit beta (397 aa).

An ATP-grasp domain is found at 9 to 254 (KALLREFGVP…ESEEDAKEIE (246 aa)). Residues K46, 53 to 55 (GRG), E109, S112, and E117 each bind ATP. Residues N209 and D223 each coordinate Mg(2+). Substrate-binding positions include N274 and 331-333 (GIM).

Belongs to the succinate/malate CoA ligase beta subunit family. As to quaternary structure, heterotetramer of two alpha and two beta subunits. Mg(2+) serves as cofactor.

The catalysed reaction is succinate + ATP + CoA = succinyl-CoA + ADP + phosphate. The enzyme catalyses GTP + succinate + CoA = succinyl-CoA + GDP + phosphate. Its pathway is carbohydrate metabolism; tricarboxylic acid cycle; succinate from succinyl-CoA (ligase route): step 1/1. In terms of biological role, succinyl-CoA synthetase functions in the citric acid cycle (TCA), coupling the hydrolysis of succinyl-CoA to the synthesis of either ATP or GTP and thus represents the only step of substrate-level phosphorylation in the TCA. The beta subunit provides nucleotide specificity of the enzyme and binds the substrate succinate, while the binding sites for coenzyme A and phosphate are found in the alpha subunit. The protein is Succinate--CoA ligase [ADP-forming] subunit beta of Nitrobacter hamburgensis (strain DSM 10229 / NCIMB 13809 / X14).